Reading from the N-terminus, the 101-residue chain is Urease subunit beta (101 aa).

This sequence belongs to the urease beta subunit family. Heterotrimer of UreA (gamma), UreB (beta) and UreC (alpha) subunits. Three heterotrimers associate to form the active enzyme.

The protein localises to the cytoplasm. The catalysed reaction is urea + 2 H2O + H(+) = hydrogencarbonate + 2 NH4(+). Its pathway is nitrogen metabolism; urea degradation; CO(2) and NH(3) from urea (urease route): step 1/1. This Pseudomonas syringae pv. syringae (strain B728a) protein is Urease subunit beta.